The sequence spans 774 residues: 5-methyltetrahydropteroyltriglutamate--homocysteine methyltransferase (774 aa).

Residues 15–18 (RELK) and lysine 116 contribute to the 5-methyltetrahydropteroyltri-L-glutamate site. Residues 445 to 447 (IGS) and glutamate 498 contribute to the L-homocysteine site. L-methionine contacts are provided by residues 445 to 447 (IGS) and glutamate 498. Residues 529–530 (RC) and tryptophan 575 each bind 5-methyltetrahydropteroyltri-L-glutamate. L-homocysteine is bound at residue aspartate 613. Aspartate 613 lines the L-methionine pocket. Glutamate 619 contributes to the 5-methyltetrahydropteroyltri-L-glutamate binding site. Residues histidine 655, cysteine 657, and glutamate 679 each coordinate Zn(2+). The active-site Proton donor is histidine 708. Residue cysteine 740 participates in Zn(2+) binding.

It belongs to the vitamin-B12 independent methionine synthase family. Requires Zn(2+) as cofactor.

It catalyses the reaction 5-methyltetrahydropteroyltri-L-glutamate + L-homocysteine = tetrahydropteroyltri-L-glutamate + L-methionine. Its pathway is amino-acid biosynthesis; L-methionine biosynthesis via de novo pathway; L-methionine from L-homocysteine (MetE route): step 1/1. Its function is as follows. Catalyzes the transfer of a methyl group from 5-methyltetrahydrofolate to homocysteine resulting in methionine formation. This is 5-methyltetrahydropteroyltriglutamate--homocysteine methyltransferase from Flavobacterium johnsoniae (strain ATCC 17061 / DSM 2064 / JCM 8514 / BCRC 14874 / CCUG 350202 / NBRC 14942 / NCIMB 11054 / UW101) (Cytophaga johnsonae).